Here is a 280-residue protein sequence, read N- to C-terminus: 4-deoxy-L-threo-5-hexosulose-uronate ketol-isomerase (280 aa).

The Zn(2+) site is built by His198, His200, Glu205, and His247.

This sequence belongs to the KduI family. Requires Zn(2+) as cofactor.

The catalysed reaction is 5-dehydro-4-deoxy-D-glucuronate = 3-deoxy-D-glycero-2,5-hexodiulosonate. Its pathway is glycan metabolism; pectin degradation; 2-dehydro-3-deoxy-D-gluconate from pectin: step 4/5. Its function is as follows. Catalyzes the isomerization of 5-dehydro-4-deoxy-D-glucuronate to 3-deoxy-D-glycero-2,5-hexodiulosonate. The chain is 4-deoxy-L-threo-5-hexosulose-uronate ketol-isomerase from Bacteroides fragilis (strain ATCC 25285 / DSM 2151 / CCUG 4856 / JCM 11019 / LMG 10263 / NCTC 9343 / Onslow / VPI 2553 / EN-2).